Reading from the N-terminus, the 236-residue chain is MAAAAPPPPPTAAPEPNMVAPLISPIGHPMFSRIRLATPSDVPFIHKLIHQMAVFERLTHLFSATESGLASTLFTSRPFQSFTVFLLEVSRSPFPATITSSPSPDFTPFFKTHNLDLPIDDPESYNFSPDMLNDVVVAGFVLFFPNYSSFLSKPGFYIEDIFVREPYRRKGFGSMLLTAVAKQAVKMGYGRVEWVVLDWNVNAIKFYEQMGAQILQEWRVCRLTGDALEAFDQVNI.

The region spanning A96 to N235 is the N-acetyltransferase domain. Residues I161 to V163, R169 to S174, N200 to N202, and Y207 each bind acetyl-CoA. Catalysis depends on Y207, which acts as the Proton donor.

The protein belongs to the acetyltransferase family. GNAT subfamily. Oligomer. As to expression, expressed throughout the plant.

The protein localises to the cytoplasm. The protein resides in the nucleus. It carries out the reaction an N-terminal L-alpha-aminoacyl-[protein] + acetyl-CoA = N-terminal N(alpha)-acetyl-L-alpha-aminoacyl-[protein] + CoA + H(+). It catalyses the reaction L-lysyl-[protein] + acetyl-CoA = N(6)-acetyl-L-lysyl-[protein] + CoA + H(+). Functionally, probable protein acetyltransferase with dual specificity triggering both N-alpha-acetylation (NTA) and epsilon-lysine acetylation (KA). In Arabidopsis thaliana (Mouse-ear cress), this protein is GCN5-related N-acetyltransferase 8.